The following is a 440-amino-acid chain: Light-independent protochlorophyllide reductase subunit N (440 aa).

[4Fe-4S] cluster contacts are provided by Cys15, Cys40, and Cys99.

This sequence belongs to the BchN/ChlN family. In terms of assembly, protochlorophyllide reductase is composed of three subunits; BchL, BchN and BchB. Forms a heterotetramer of two BchB and two BchN subunits. The cofactor is [4Fe-4S] cluster.

It carries out the reaction chlorophyllide a + oxidized 2[4Fe-4S]-[ferredoxin] + 2 ADP + 2 phosphate = protochlorophyllide a + reduced 2[4Fe-4S]-[ferredoxin] + 2 ATP + 2 H2O. The protein operates within porphyrin-containing compound metabolism; bacteriochlorophyll biosynthesis (light-independent). Functionally, component of the dark-operative protochlorophyllide reductase (DPOR) that uses Mg-ATP and reduced ferredoxin to reduce ring D of protochlorophyllide (Pchlide) to form chlorophyllide a (Chlide). This reaction is light-independent. The NB-protein (BchN-BchB) is the catalytic component of the complex. This chain is Light-independent protochlorophyllide reductase subunit N, found in Heliobacterium mobile (Heliobacillus mobilis).